Consider the following 330-residue polypeptide: Homeobox protein Hox-C13 (330 aa).

Gly residues predominate over residues 30–47 (GGGGGGGGGTGGAGGGCS). The segment at 30–50 (GGGGGGGGGTGGAGGGCSGAS) is disordered. The homeobox DNA-binding region spans 260–319 (GRKKRVPYTKVQLKELEKEYAASKFITKEKRRRISATTNLSERQVTIWFQNRRVKEKKVV).

This sequence belongs to the Abd-B homeobox family.

The protein localises to the nucleus. Transcription factor which plays a role in hair follicle differentiation. Regulates FOXQ1 expression and that of other hair-specific genes. The protein is Homeobox protein Hox-C13 (HOXC13) of Homo sapiens (Human).